Here is a 658-residue protein sequence, read N- to C-terminus: Threonine--tRNA ligase (658 aa).

The TGS domain occupies 1–63; it reads MDQITITFPD…DDNASIDFVA (63 aa). Residues 245-548 are catalytic; that stretch reads DHRKLGRELD…LIEHYAGNFP (304 aa). Zn(2+) is bound by residues cysteine 341, histidine 392, and histidine 525.

The protein belongs to the class-II aminoacyl-tRNA synthetase family. Homodimer. Requires Zn(2+) as cofactor.

The protein localises to the cytoplasm. It carries out the reaction tRNA(Thr) + L-threonine + ATP = L-threonyl-tRNA(Thr) + AMP + diphosphate + H(+). In terms of biological role, catalyzes the attachment of threonine to tRNA(Thr) in a two-step reaction: L-threonine is first activated by ATP to form Thr-AMP and then transferred to the acceptor end of tRNA(Thr). Also edits incorrectly charged L-seryl-tRNA(Thr). The protein is Threonine--tRNA ligase of Rhodopseudomonas palustris (strain ATCC BAA-98 / CGA009).